The following is a 156-amino-acid chain: Transcriptional repressor NrdR (156 aa).

A zinc finger spans residues 3-34 (CPFCSETDTKVIDSRLVADGAQVRRRRECLTC). The ATP-cone domain maps to 49–139 (PRVIKQDGTR…VYRSFQDLSE (91 aa)).

It belongs to the NrdR family. Requires Zn(2+) as cofactor.

Its function is as follows. Negatively regulates transcription of bacterial ribonucleotide reductase nrd genes and operons by binding to NrdR-boxes. The polypeptide is Transcriptional repressor NrdR (Saccharophagus degradans (strain 2-40 / ATCC 43961 / DSM 17024)).